The primary structure comprises 303 residues: Glycine--tRNA ligase alpha subunit (303 aa).

The protein belongs to the class-II aminoacyl-tRNA synthetase family. As to quaternary structure, tetramer of two alpha and two beta subunits.

It localises to the cytoplasm. The catalysed reaction is tRNA(Gly) + glycine + ATP = glycyl-tRNA(Gly) + AMP + diphosphate. This chain is Glycine--tRNA ligase alpha subunit, found in Methylobacterium radiotolerans (strain ATCC 27329 / DSM 1819 / JCM 2831 / NBRC 15690 / NCIMB 10815 / 0-1).